Reading from the N-terminus, the 915-residue chain is MASESDTEEFYDAPEDVHLGTGYPVGSPGKVGLLSFKEAENTANQAGNESPVQELRQDVSKKIIESIIEESQKVLQLEDDSLDSKGKGLSDEATAGPSVAGTEFSNIPGLLAIEHELQQDSEKAESQNVAEESELETQKCFPSDETCEKSEKTVDETDNLTEVSSGEQLDASGLEAETLNKEALEVKEGDVLDPASLDTLSTTDFAAVEEVAPAKPPRHLTPEPDIVASTKKPVPARPPPPTNFPPPRPPPPSRPAPPPRKKKSELEFEALKTPDLDVPKENITSDSLLTTNMASENTVRDSLPSLDLASATSGDKIVTAQENGKAPDVQTVAGEVMGPQRPRSNSGRELTDEEILASVMIKNLDTGEEIPLSLAEEKLPTGINPLTLHIMRRTKEYVSNDATQSDDEEKLQSQQTDTDGGRLKQKTTQLKKFLGKSVKRAKHLAEEYGERAINKVKSVRDEVFHTDQDDPSSSDDEGMPYTRPVKFKAAHGFKGPYDFDQIKVVQDLSGEHMGAVWTMKFSHCGRLLASAGQDNIVRIWALKNAFDYFNNMRMKYNTEGRVSPSPSQESLSSSKSDTDMGVCSGTDEDPDDKNAPFRQRPFCKYKGHTADLLDLSWSKNYFLLSSSMDKTVRLWHISRRECLCCFQHIDFVTAIAFHPRDDRYFLSGSLDGKLRLWNIPDKKVALWNEVDGQTKLITAANFCQNGKYAVIGTYDGRCIFYDTEHLKYHTQIHVRSTRGRNKVGRKITGIEPLPGENKILVTSNDSRIRLYDLRDLSLSMKYKGYVNSSSQIKASFSHDFTYLVSGSEDKYVYIWSTYHDLSKFTSVRRDRNDFWEGIKAHNAVVTSAIFAPNPSLMLSLDVQSEKLEGIDKYEDAEVLDSTSTGIVKTDNTEVLLSADFTGAIKVFINKRKTVS.

A compositionally biased stretch (acidic residues) spans 1–14 (MASESDTEEFYDAP). Positions 1–24 (MASESDTEEFYDAPEDVHLGTGYP) are disordered. N-acetylalanine is present on alanine 2. The tract at residues 2 to 173 (ASESDTEEFY…SSGEQLDASG (172 aa)) is binding activity. Residue serine 3 is modified to Phosphoserine. An FFAT-like motif motif is present at residues 9–15 (EFYDAPE). Tyrosine 11 bears the Phosphotyrosine mark. 6 positions are modified to phosphoserine: serine 27, serine 50, serine 66, serine 71, serine 81, and serine 126. 3 disordered regions span residues 79–102 (DDSL…VAGT), 117–174 (LQQD…ASGL), and 208–282 (VEEV…PKEN). Residues 114–139 (EHELQQDSEKAESQNVAEESELETQK) are a coiled coil. Positions 146 to 155 (TCEKSEKTVD) are enriched in basic and acidic residues. A phosphothreonine mark is found at threonine 161 and threonine 221. The interval 213 to 259 (PAKPPRHLTPEPDIVASTKKPVPARPPPPTNFPPPRPPPPSRPAPPP) is important for interaction with ARHGAP26 AND ARHGAP10. Residues 235-258 (PARPPPPTNFPPPRPPPPSRPAPP) are compositionally biased toward pro residues. The residue at position 264 (serine 264) is a Phosphoserine. Basic and acidic residues predominate over residues 264–280 (SELEFEALKTPDLDVPK). A Phosphothreonine modification is found at threonine 273. Residues 336-349 (VMGPQRPRSNSGRE) form an important for interaction with RAB11A region. A phosphoserine mark is found at serine 344 and serine 346. Phosphothreonine is present on residues threonine 351 and threonine 403. Disordered regions lie at residues 399 to 425 (SNDA…RLKQ) and 461 to 481 (DEVF…GMPY). A phosphoserine mark is found at serine 405, serine 472, serine 473, and serine 474. A compositionally biased stretch (acidic residues) spans 469–478 (DDPSSSDDEG). Tyrosine 481 carries the post-translational modification Phosphotyrosine. The stretch at 511 to 550 (EHMGAVWTMKFSHCGRLLASAGQDNIVRIWALKNAFDYFN) is one WD 1 repeat. The interval 559–593 (EGRVSPSPSQESLSSSKSDTDMGVCSGTDEDPDDK) is disordered. Serine 563 and serine 567 each carry phosphoserine. Residues 563–575 (SPSPSQESLSSSK) are compositionally biased toward low complexity. WD repeat units lie at residues 607–645 (GHTA…CLCC), 647–687 (QHID…VALW), 692–731 (GQTK…YHTQ), 742–781 (KVGR…LSMK), 786–825 (VNSS…SKFT), 840–880 (AHNA…EVLD), and 882–915 (TSTG…KTVS).

In terms of assembly, interacts with the GTP-bound form of RAB11 when membrane-associated. Interacts with GRAF1/ARHGAP26 or GRAF2/ARHGAP10; the interaction connects the endoplasmic reticulum (ER) with the endosomal tubule. Interacts (via FFAT-like motif) with VAPA (via MSP domain) or VAPB (via MSP domain); the interaction connects the ER with the endosomal tubule. Does not bind to other Rab and Rho small G proteins. Post-translationally, phosphorylated by ATK1; the phosphorylation stabilizes its interaction with RAB11A and RAB11B.

It localises to the cytoplasm. The protein localises to the cytosol. The protein resides in the perinuclear region. It is found in the endosome membrane. Its subcellular location is the golgi apparatus. It localises to the trans-Golgi network. Downstream effector for Rab11 which regulates Rab11 intracellular membrane trafficking functions such as endocytic recycling, intracellular ciliogenesis and protein export. ATK1-mediated phosphorylation of WDR44 induces binding to Rab11 which activates endocytic recycling of transferrin receptor back to the plasma membrane. When bound to Rab11, prevents the formation of the ciliogenic Rab11-Rabin8/RAB3IP-RAB11FIP3 complex, therefore inhibiting preciliary trafficking and ciliogenesis. Participates in neo-synthesized protein export by connecting the endoplasmic reticulum (ER) with the endosomal tubule via direct interactions with the integral ER proteins VAPA or VAPB and the endosomal protein GRAFs (GRAF1/ARHGAP26 or GRAF2/ARHGAP10), which facilitates the transfer of proteins such as E-cadherin, MPP14 and CFTR into a Rab8-Rab10-Rab11-dependent export route. The polypeptide is WD repeat-containing protein 44 (Mus musculus (Mouse)).